The following is a 199-amino-acid chain: 3-isopropylmalate dehydratase small subunit (199 aa).

It belongs to the LeuD family. LeuD type 1 subfamily. In terms of assembly, heterodimer of LeuC and LeuD.

The catalysed reaction is (2R,3S)-3-isopropylmalate = (2S)-2-isopropylmalate. The protein operates within amino-acid biosynthesis; L-leucine biosynthesis; L-leucine from 3-methyl-2-oxobutanoate: step 2/4. In terms of biological role, catalyzes the isomerization between 2-isopropylmalate and 3-isopropylmalate, via the formation of 2-isopropylmaleate. In Kocuria rhizophila (strain ATCC 9341 / DSM 348 / NBRC 103217 / DC2201), this protein is 3-isopropylmalate dehydratase small subunit.